A 191-amino-acid chain; its full sequence is IMP cyclohydrolase (191 aa).

This sequence belongs to the archaeal IMP cyclohydrolase family.

It catalyses the reaction IMP + H2O = 5-formamido-1-(5-phospho-D-ribosyl)imidazole-4-carboxamide. Its pathway is purine metabolism; IMP biosynthesis via de novo pathway; IMP from 5-formamido-1-(5-phospho-D-ribosyl)imidazole-4-carboxamide: step 1/1. Functionally, catalyzes the cyclization of 5-formylamidoimidazole-4-carboxamide ribonucleotide to IMP. This is IMP cyclohydrolase from Natronomonas pharaonis (strain ATCC 35678 / DSM 2160 / CIP 103997 / JCM 8858 / NBRC 14720 / NCIMB 2260 / Gabara) (Halobacterium pharaonis).